The primary structure comprises 82 residues: Cell division topological specificity factor (82 aa).

Belongs to the MinE family.

In terms of biological role, prevents the cell division inhibition by proteins MinC and MinD at internal division sites while permitting inhibition at polar sites. This ensures cell division at the proper site by restricting the formation of a division septum at the midpoint of the long axis of the cell. In Buchnera aphidicola subsp. Cinara cedri (strain Cc), this protein is Cell division topological specificity factor.